The chain runs to 261 residues: tRNA pseudouridine synthase A (261 aa).

The active-site Nucleophile is aspartate 51. Tyrosine 109 is a binding site for substrate.

Belongs to the tRNA pseudouridine synthase TruA family. As to quaternary structure, homodimer.

It carries out the reaction uridine(38/39/40) in tRNA = pseudouridine(38/39/40) in tRNA. Formation of pseudouridine at positions 38, 39 and 40 in the anticodon stem and loop of transfer RNAs. The protein is tRNA pseudouridine synthase A of Shewanella baltica (strain OS195).